The primary structure comprises 85 residues: Cell division topological specificity factor (85 aa).

Belongs to the MinE family.

Prevents the cell division inhibition by proteins MinC and MinD at internal division sites while permitting inhibition at polar sites. This ensures cell division at the proper site by restricting the formation of a division septum at the midpoint of the long axis of the cell. This Xylella fastidiosa (strain M12) protein is Cell division topological specificity factor.